We begin with the raw amino-acid sequence, 987 residues long: Kinesin-like protein KIN-14G (987 aa).

In terms of domain architecture, Calponin-homology (CH) spans 44–163; sequence SLRRYEAAGW…CILALKSYSE (120 aa). A disordered region spans residues 201-221; it reads ISRTQSTDMLSTDQPLSSDGD. The Kinesin motor domain occupies 394-721; the sequence is NIRVYCRVRP…LKFAERVGSV (328 aa). 478–485 lines the ATP pocket; the sequence is GQTGSGKT. A coiled-coil region spans residues 725 to 754; the sequence is AARVNKDNSEVKELKEQIANLKMALVRKGN. Disordered regions lie at residues 759–849 and 927–987; these read QPTA…ESKS and NIQN…SLGT. The segment covering 788 to 797 has biased composition (polar residues); that stretch reads MGNTSNNSRP. The span at 840–849 shows a compositional bias: basic and acidic residues; it reads GKDEDRESKS. Residues 964 to 974 show a composition bias toward polar residues; sequence PPNTVNSQPQR.

It belongs to the TRAFAC class myosin-kinesin ATPase superfamily. Kinesin family. KIN-14 subfamily. As to quaternary structure, monomer. In terms of tissue distribution, flower specific.

The protein localises to the cytoplasm. It is found in the cytoskeleton. Functionally, microtubule-binding motor protein. The sequence is that of Kinesin-like protein KIN-14G from Arabidopsis thaliana (Mouse-ear cress).